We begin with the raw amino-acid sequence, 349 residues long: Histidinol-phosphate aminotransferase (349 aa).

At K206 the chain carries N6-(pyridoxal phosphate)lysine.

This sequence belongs to the class-II pyridoxal-phosphate-dependent aminotransferase family. Histidinol-phosphate aminotransferase subfamily. As to quaternary structure, homodimer. Pyridoxal 5'-phosphate is required as a cofactor.

It carries out the reaction L-histidinol phosphate + 2-oxoglutarate = 3-(imidazol-4-yl)-2-oxopropyl phosphate + L-glutamate. It participates in amino-acid biosynthesis; L-histidine biosynthesis; L-histidine from 5-phospho-alpha-D-ribose 1-diphosphate: step 7/9. The polypeptide is Histidinol-phosphate aminotransferase (Hydrogenobaculum sp. (strain Y04AAS1)).